The chain runs to 201 residues: Recombination protein RecR (201 aa).

A C4-type zinc finger spans residues 60 to 75 (CSCCGNVDTSDPCTIC). A Toprim domain is found at 83-178 (ATLIVVEDVS…RVTRLAHGVP (96 aa)).

Belongs to the RecR family.

Its function is as follows. May play a role in DNA repair. It seems to be involved in an RecBC-independent recombinational process of DNA repair. It may act with RecF and RecO. The sequence is that of Recombination protein RecR from Brucella ovis (strain ATCC 25840 / 63/290 / NCTC 10512).